The following is a 425-amino-acid chain: Ribosome biogenesis protein WDR12 homolog (425 aa).

Residues 7 to 93 form a ubiquitin-like (UBL) domain region; sequence IQAKFFTKDE…ETIVHLEYLE (87 aa). 7 WD repeats span residues 105-142, 145-187, 194-233, 265-303, 305-344, 350-390, and 394-425; these read IHDDWVSAVHASEAGILSGCYDNTLHIWDTATGTRRLT, GHLG…NAVE, GHARSVDCVDVSWNGAKFVTGSFDHMLKVWSADPDSTDTD, GHHEAVTGVQWTDEGEVATCSMDHTLRIWDVELGGMKSQ, AGSKAFLGISYSRLNRQIVSASSDRHVRLWDPRTKDGTIV, SHAG…APLY, and GHEDKVLAVDWSLGKYMISGGADNQLKIFEHK. The disordered stretch occupies residues 227 to 253; the sequence is PDSTDTDHGQDGSEEGSRKKQKTVDGK. Over residues 231 to 253 the composition is skewed to basic and acidic residues; that stretch reads DTDHGQDGSEEGSRKKQKTVDGK.

It belongs to the WD repeat WDR12/YTM1 family.

It localises to the nucleus. The protein resides in the nucleolus. It is found in the nucleoplasm. Its function is as follows. Required for maturation of ribosomal RNAs and formation of the large ribosomal subunit. The sequence is that of Ribosome biogenesis protein WDR12 homolog from Ixodes scapularis (Black-legged tick).